Here is a 122-residue protein sequence, read N- to C-terminus: Small ribosomal subunit protein uS13 (122 aa).

The interval 97–122 (PVRGQRTHTNARTRKGPAKAIAGKKK) is disordered.

This sequence belongs to the universal ribosomal protein uS13 family. In terms of assembly, part of the 30S ribosomal subunit. Forms a loose heterodimer with protein S19. Forms two bridges to the 50S subunit in the 70S ribosome.

Functionally, located at the top of the head of the 30S subunit, it contacts several helices of the 16S rRNA. In the 70S ribosome it contacts the 23S rRNA (bridge B1a) and protein L5 of the 50S subunit (bridge B1b), connecting the 2 subunits; these bridges are implicated in subunit movement. Contacts the tRNAs in the A and P-sites. The chain is Small ribosomal subunit protein uS13 from Brucella abortus (strain S19).